We begin with the raw amino-acid sequence, 825 residues long: MQTPATIKSYQDIKANIEKACQRIAPLWPLKHFVAVNPYVGLRDQPFWRADQTLRKITGKGLTMPRPYYEEQIANGRITQEDLDEALKEMHSNWSVTQLKQAMKQRSASRNVPFPVFADAMFADDRRDWPGFVVERISQYCAAYFDEGQATWSMPWRDDPMYQAWLKFMHFDKSPRMVGLRGIGEAAAALPAAAETAIALALKELSVPFDLIDDYLFAALLSIGGWAGWARYLRWQAELKGETDQSLRDLLAIRVCWDAILHKTCADIAVRKQWHLMLHTQQNRAIEKPSEHVDAILQTALEIGYQRSLIKSLKEASRPSNTVIERPVAQAAFCIDVRSEIIRRALETVAPGIQTLGFAGFFGVLMEYVPFGSNAPKGHLPVIFNPPYRVCEDLSHASEDETQRHAAKRQLRLRVATAWKSFKTSAVSTFTFVEATGLLYAPKLFGDSMGWTRTVPHPDERGLDSGTKQRLRPRLIASGNGKSSAKSTGIPETERAGVGEFILKNMGLTQTFARLILLAGHGSTTVNNPQGTGLDCGACAGQTGEASARIAVTLLNDPATRRGLEEKGLKIPKDTYFIAGLHDTTTDEVTIFDTEDLPTTHAKDLAQLRQWLADAGELTRLERATLLGTASQAPEVVTRDMRRRTRDWAEVRPEWALAGNAAFIAAPRQRTRGVDLEGRAFLHDYDWHKDAGFSTLELIMTAPMVVANWINMQYYGSMVDNLRFGSGNKVLHNVVGGSIGVLEGNGGDLRVGFALQSLHDGKRWIHEPVRLNVVIEAPQAEMESIISRHILVRELVDNGWLYLFQIDDDGSVYRRVCDKQWPRMT.

Residues cysteine 334, aspartate 336, histidine 521, and cysteine 536 each contribute to the Zn(2+) site.

Belongs to the inorganic carbon transporter (TC 9.A.2) DabA family. In terms of assembly, forms a complex with DabB. It depends on Zn(2+) as a cofactor.

It is found in the cell inner membrane. Part of an energy-coupled inorganic carbon pump. The sequence is that of Probable inorganic carbon transporter subunit DabA from Acidithiobacillus ferrooxidans (strain ATCC 53993 / BNL-5-31) (Leptospirillum ferrooxidans (ATCC 53993)).